The sequence spans 142 residues: Transcriptional regulator MraZ (142 aa).

2 consecutive SpoVT-AbrB domains span residues 5–47 (EFTH…PLNE) and 76–119 (ATDC…SAER).

The protein belongs to the MraZ family. As to quaternary structure, forms oligomers.

It localises to the cytoplasm. Its subcellular location is the nucleoid. The sequence is that of Transcriptional regulator MraZ from Limosilactobacillus reuteri (strain DSM 20016) (Lactobacillus reuteri).